The following is a 169-amino-acid chain: Ribosome maturation factor RimM (169 aa).

In terms of domain architecture, PRC barrel spans 95–168 (PPDTAYIHDL…EMTIRRFDEF (74 aa)).

The protein belongs to the RimM family. In terms of assembly, binds ribosomal protein uS19.

Its subcellular location is the cytoplasm. Its function is as follows. An accessory protein needed during the final step in the assembly of 30S ribosomal subunit, possibly for assembly of the head region. Essential for efficient processing of 16S rRNA. May be needed both before and after RbfA during the maturation of 16S rRNA. It has affinity for free ribosomal 30S subunits but not for 70S ribosomes. The sequence is that of Ribosome maturation factor RimM from Prosthecochloris aestuarii (strain DSM 271 / SK 413).